The sequence spans 475 residues: Transcription factor EB (475 aa).

Positions 1–52 (MASRIGLRMQLMREQAQQEEQRERMQQQAVMHYMQQQQQQQQQLGGPPTPAI) are disordered. The segment at 1–166 (MASRIGLRMQ…DDVIDNIMRL (166 aa)) is interaction with ACSS2. Over residues 26–43 (QQQAVMHYMQQQQQQQQQ) the composition is skewed to low complexity. A phosphoserine mark is found at serine 108, serine 113, serine 121, and serine 137. Residues 135 to 152 (GNSAPNSPMAMLHISSNP) carry the Nuclear export signal motif. The residue at position 141 (serine 141) is a Phosphoserine; by MTOR. Residues 155 to 164 (EFDDVIDNIM) are strong transcription activation domain. Residue threonine 182 is modified to Phosphothreonine. Serine 210 bears the Phosphoserine; by MTOR mark. Cysteine 211 bears the S-(2,3-dicarboxypropyl)cysteine mark. Positions 234 to 287 (QKKDNHNLIERRRRFNINDRIKELGMLIPKANDLDVRWNKGTILKASVDYIRRM) constitute a bHLH domain. Residues 244-247 (RRRR) carry the Nuclear localization signal motif. A leucine-zipper region spans residues 297 to 318 (LENHSRRLEMTNKQLWLRIQEL). At serine 331 the chain carries Phosphoserine. Residues 351–429 (SEDGPGEALM…HGSPFPNLSK (79 aa)) form a disordered region. Over residues 380–389 (LPSAAQPQSP) the composition is skewed to low complexity. Residues serine 422, serine 440, serine 465, serine 466, and serine 468 each carry the phosphoserine modification. Over residues 445–468 (ASDPLFSTMSPEASKASSRRSSFS) the composition is skewed to low complexity. The tract at residues 445 to 475 (ASDPLFSTMSPEASKASSRRSSFSMEEGDVL) is disordered.

Belongs to the MiT/TFE family. In terms of assembly, homodimer and heterodimer; with TFE3 or MITF. Interacts (when phosphorylated by MTOR) with YWHAZ; promoting retention in the cytosol. Interacts with Irgm1; promoting association between TFEB and PPP3CB and dephosphorylation. Interacts with small GTPases Rag (RagA/RRAGA, RagB/RRAGB, RagC/RRAGC and/or RagD/RRAGD); promoting its recruitment to lysosomal membrane in the presence of nutrients. Interacts with ACSS2. Post-translationally, phosphorylation at Ser-210 by MTOR via non-canonical mTORC1 pathway regulates its subcellular location and activity. When nutrients are present, phosphorylation by MTOR promotes association with 14-3-3/YWHA adapters and retention in the cytosol. Inhibition of mTORC1, starvation and lysosomal disruption, promotes dephosphorylation by calcineurin PPP3CB and translocation to the nucleus. Dephosphorylated by calcineurin PPP3CB in response to lysosomal Ca(2+) release. Irgm1 promotes dephosphorylation by calcineurin PPP3CB, resulting in TFEB nuclear translocation and stimulation of lysosomal biogenesis. Exported from the nucleus in a mTORC1-dependent manner in response to nutrient availability. In terms of processing, alkylated via a non-enzymatic covalent modification. Itaconate, an anti-inflammatory metabolite generated in response to lipopolysaccharide, alkylates Cys-211, preventing association with 14-3-3/YWHA adapters, thereby promoting nuclear translocation and activity. Sumoylated; does not affect dimerization with MITF. As to expression, widely expressed.

Its subcellular location is the nucleus. It is found in the cytoplasm. The protein localises to the cytosol. The protein resides in the lysosome membrane. Transcription factor that acts as a master regulator of lysosomal biogenesis, autophagy, lysosomal exocytosis, lipid catabolism, energy metabolism and immune response. Specifically recognizes and binds E-box sequences (5'-CANNTG-3'); efficient DNA-binding requires dimerization with itself or with another MiT/TFE family member such as TFE3 or MITF. Involved in the cellular response to amino acid availability by acting downstream of MTOR: in the presence of nutrients, TFEB phosphorylation by MTOR promotes its cytosolic retention and subsequent inactivation. Upon starvation or lysosomal stress, inhibition of MTOR induces TFEB dephosphorylation, resulting in nuclear localization and transcription factor activity. Specifically recognizes and binds the CLEAR-box sequence (5'-GTCACGTGAC-3') present in the regulatory region of many lysosomal genes, leading to activate their expression, thereby playing a central role in expression of lysosomal genes. Regulates lysosomal positioning in response to nutrient deprivation by promoting the expression of PIP4P1. Acts as a positive regulator of autophagy by promoting expression of genes involved in autophagy. In association with TFE3, activates the expression of CD40L in T-cells, thereby playing a role in T-cell-dependent antibody responses in activated CD4(+) T-cells and thymus-dependent humoral immunity. Specifically recognizes the gamma-E3 box, a subset of E-boxes, present in the heavy-chain immunoglobulin enhancer. Plays a role in the signal transduction processes required for normal vascularization of the placenta. Involved in the immune response to infection by the bacteria S.aureus, S.typhimurium or S.enterica. Infection promotes itaconate production, leading to alkylation, resulting in nuclear localization and transcription factor activity. Itaconate-mediated alkylation activates TFEB-dependent lysosomal biogenesis, facilitating the bacteria clearance during the antibacterial innate immune response. In association with ACSS2, promotes the expression of genes involved in lysosome biogenesis and both autophagy upon glucose deprivation. This chain is Transcription factor EB, found in Mus musculus (Mouse).